The sequence spans 228 residues: Isonitrile hydratase (228 aa).

Residue Cys101 is part of the active site.

Homodimer.

It carries out the reaction N-cyclohexylformamide = cyclohexyl isocyanide + H2O. With respect to regulation, sensitive to thiol reagents and oxidizing reagents, but is not influenced by chelators or reducing reagents. Catalyzes the hydration of cyclohexyl isocyanide to N-cyclohexylformamide. Acts on various isonitriles, but not on nitriles or amides. Probably involved in detoxification. The sequence is that of Isonitrile hydratase (inhA) from Pseudomonas putida (Arthrobacter siderocapsulatus).